Reading from the N-terminus, the 381-residue chain is Lipid-A-disaccharide synthase (381 aa).

The protein belongs to the LpxB family.

The enzyme catalyses a lipid X + a UDP-2-N,3-O-bis[(3R)-3-hydroxyacyl]-alpha-D-glucosamine = a lipid A disaccharide + UDP + H(+). Its pathway is bacterial outer membrane biogenesis; LPS lipid A biosynthesis. In terms of biological role, condensation of UDP-2,3-diacylglucosamine and 2,3-diacylglucosamine-1-phosphate to form lipid A disaccharide, a precursor of lipid A, a phosphorylated glycolipid that anchors the lipopolysaccharide to the outer membrane of the cell. The polypeptide is Lipid-A-disaccharide synthase (Rickettsia bellii (strain OSU 85-389)).